Here is a 634-residue protein sequence, read N- to C-terminus: Probable potassium transport system protein Kup (634 aa).

12 consecutive transmembrane segments (helical) span residues 21–41 (IILS…LYTL), 58–78 (VLGI…IKYV), 110–130 (IYIV…DGII), 148–168 (PHMK…LFLC), 180–200 (FGPI…YNII), 217–237 (FFLE…LAVT), 258–278 (WMYV…ALVL), 296–316 (GLYP…QALI), 348–368 (IYVP…VIGF), 377–397 (AYGV…IIYA), 408–428 (LLMI…ANII), and 432–452 (DGAW…RTWL).

It belongs to the HAK/KUP transporter (TC 2.A.72) family.

It is found in the cell inner membrane. It catalyses the reaction K(+)(in) + H(+)(in) = K(+)(out) + H(+)(out). In terms of biological role, transport of potassium into the cell. Likely operates as a K(+):H(+) symporter. The chain is Probable potassium transport system protein Kup from Xylella fastidiosa (strain Temecula1 / ATCC 700964).